Reading from the N-terminus, the 463-residue chain is Elongation factor 1-alpha (463 aa).

Positions 8-245 (KTHLNIVIIG…DALVPPVRPA (238 aa)) constitute a tr-type G domain. The G1 stretch occupies residues 17–24 (GHVDSGKS). Position 17–24 (17–24 (GHVDSGKS)) interacts with GTP. Positions 73 to 77 (GITID) are G2. Positions 94–97 (DAPG) are G3. Residues 94–98 (DAPGH) and 156–159 (NKMD) contribute to the GTP site. Residues 156–159 (NKMD) are G4. The G5 stretch occupies residues 197–199 (SGW).

It belongs to the TRAFAC class translation factor GTPase superfamily. Classic translation factor GTPase family. EF-Tu/EF-1A subfamily. The 42S RNP particle comprises four subunits each of which contains one molecule of 5S RNA, three molecules of tRNA, two molecules of EF1-alpha and one molecule of the 5S RNA binding protein 43.

The protein localises to the cytoplasm. This protein is one of two protein components of a 42S RNP particle that is very abundant in previtellogenic oocytes. A major function served by 42sp50 appears to be the storage of tRNAs for later use in oogenesis and early embryogenesis. Purified 42S particles can directly transfer aminoacyl tRNA to ribosomes. This chain is Elongation factor 1-alpha, found in Xenopus laevis (African clawed frog).